Here is a 1199-residue protein sequence, read N- to C-terminus: Nucleolar protein 6 (1199 aa).

Basic residues predominate over residues 1–10 (MLRNKRKAGK). Disordered regions lie at residues 1-51 (MLRN…EPKP) and 1146-1199 (KREQ…KALK). Basic and acidic residues-rich tracts occupy residues 28 to 37 (HAEDHSDLEH) and 1146 to 1169 (KREQ…EKST).

Belongs to the NRAP family. As to quaternary structure, part of the small subunit (SSU) processome, composed of more than 70 proteins and the RNA chaperone small nucleolar RNA (snoRNA) U3.

The protein resides in the nucleus. Its subcellular location is the nucleolus. It localises to the chromosome. Its function is as follows. Part of the small subunit (SSU) processome, first precursor of the small eukaryotic ribosomal subunit. During the assembly of the SSU processome in the nucleolus, many ribosome biogenesis factors, an RNA chaperone and ribosomal proteins associate with the nascent pre-rRNA and work in concert to generate RNA folding, modifications, rearrangements and cleavage as well as targeted degradation of pre-ribosomal RNA by the RNA exosome. The sequence is that of Nucleolar protein 6 from Drosophila yakuba (Fruit fly).